The primary structure comprises 423 residues: uncharacterized protein (423 aa).

Residues 383-423 (ARGTTGGGGTRSGTSTDGQEDGRKPPVVVIREQPPPGNPPR) are disordered.

The protein belongs to the mycobacterial PPE family.

This is an uncharacterized protein from Mycobacterium tuberculosis (strain CDC 1551 / Oshkosh).